The primary structure comprises 126 residues: Protein ApaG (126 aa).

The 125-residue stretch at 2-126 folds into the ApaG domain; sequence SALDDSIRVE…FRLALPGLLH (125 aa).

This is Protein ApaG from Shewanella sp. (strain MR-7).